The following is a 1912-amino-acid chain: MASGLGSPSPCSAGSEEEDMDALLNNSLPPPHPENEEDPEEDLSETETPKLKKKKKPKKPRDPKIPKSKRQKKERMLLCRQLGDSSGEGPEFVEEEEEVALRSDSEGSDYTPGKKKKKKLGPKKEKKSKSKRKEEEEEEDDDDDSKEPKSSAQLLEDWGMEDIDHVFSEEDYRTLTNYKAFSQFVRPLIAAKNPKIAVSKMMMVLGAKWREFSTNNPFKGSSGASVAAAAAAAVAVVESMVTATEVAPPPPPVEVPIRKAKTKEGKGPNARRKPKGSPRVPDAKKPKPKKVAPLKIKLGGFGSKRKRSSSEDDDLDVESDFDDASINSYSVSDGSTSRSSRSRKKLRTTKKKKKGEEEVTAVDGYETDHQDYCEVCQQGGEIILCDTCPRAYHMVCLDPDMEKAPEGKWSCPHCEKEGIQWEAKEDNSEGEEILEEVGGDLEEEDDHHMEFCRVCKDGGELLCCDTCPSSYHIHCLNPPLPEIPNGEWLCPRCTCPALKGKVQKILIWKWGQPPSPTPVPRPPDADPNTPSPKPLEGRPERQFFVKWQGMSYWHCSWVSELQLELHCQVMFRNYQRKNDMDEPPSGDFGGDEEKSRKRKNKDPKFAEMEERFYRYGIKPEWMMIHRILNHSVDKKGHVHYLIKWRDLPYDQASWESEDVEIQDYDLFKQSYWNHRELMRGEEGRPGKKLKKVKLRKLERPPETPTVDPTVKYERQPEYLDATGGTLHPYQMEGLNWLRFSWAQGTDTILADEMGLGKTVQTAVFLYSLYKEGHSKGPFLVSAPLSTIINWEREFEMWAPDMYVVTYVGDKDSRAIIRENEFSFEDNAIRGGKKASRMKKEASVKFHVLLTSYELITIDMAILGSIDWACLIVDEAHRLKNNQSKFFRVLNGYSLQHKLLLTGTPLQNNLEELFHLLNFLTPERFHNLEGFLEEFADIAKEDQIKKLHDMLGPHMLRRLKADVFKNMPSKTELIVRVELSPMQKKYYKYILTRNFEALNARGGGNQVSLLNVVMDLKKCCNHPYLFPVAAMEAPKMPNGMYDGSALIRASGKLLLLQKMLKNLKEGGHRVLIFSQMTKMLDLLEDFLEHEGYKYERIDGGITGNMRQEAIDRFNAPGAQQFCFLLSTRAGGLGINLATADTVIIYDSDWNPHNDIQAFSRAHRIGQNKKVMIYRFVTRASVEERITQVAKKKMMLTHLVVRPGLGSKTGSMSKQELDDILKFGTEELFKDEATDGGGDNKEGEDSSVIHYDDKAIERLLDRNQDETEDTELQGMNEYLSSFKVAQYVVREEEMGEEEEVEREIIKQEESVDPDYWEKLLRHHYEQQQEDLARNLGKGKRIRKQVNYNDGSQEDRDWQDDQSDNQSDYSVASEEGDEDFDERSEAPRRPSRKGLRNDKDKPLPPLLARVGGNIEVLGFNARQRKAFLNAIMRYGMPPQDAFTTQWLVRDLRGKSEKEFKAYVSLFMRHLCEPGADGAETFADGVPREGLSRQHVLTRIGVMSLIRKKVQEFEHVNGRWSMPELAEVEENKKMSQPGSPSPKTPTPSTPGDTQPNTPAPVPPAEDGIKIEENSLKEEESIEGEKEVKSTAPETAIECTQAPAPASEDEKVVVEPPEGEEKVEKAEVKERTEEPMETEPKGAADVEKVEEKSAIDLTPIVVEDKEEKKEEEEKKEVMLQNGETPKDLNDEKQKKNIKQRFMFNIADGGFTELHSLWQNEERAATVTKKTYEIWHRRHDYWLLAGIINHGYARWQDIQNDPRYAILNEPFKGEMNRGNFLEIKNKFLARRFKLLEQALVIEEQLRRAAYLNMSEDPSHPSMALNTRFAEVECLAESHQHLSKESMAGNKPANAVLHKVLKQLEELLSDMKADVTRLPATIARIPPVAVRLQMSERNILSRLANRAPEPTPQQVAQQQ.

Residues Met-1–Asp-157 form a disordered region. Residues Asn-35 to Glu-45 show a composition bias toward acidic residues. Ser-44 carries the post-translational modification Phosphoserine. Positions Gly-113–Lys-131 are enriched in basic residues. Residue Lys-133 forms a Glycyl lysine isopeptide (Lys-Gly) (interchain with G-Cter in SUMO2) linkage. The segment covering Glu-135–Ser-145 has biased composition (acidic residues). Glycyl lysine isopeptide (Lys-Gly) (interchain with G-Cter in SUMO2) cross-links involve residues Lys-146, Lys-179, and Lys-297. Residues Ala-243–Thr-360 form a disordered region. The short motif at Lys-295–Leu-298 is the KIKL element. Ser-303 carries the post-translational modification Phosphoserine. Lys-304 participates in a covalent cross-link: Glycyl lysine isopeptide (Lys-Gly) (interchain with G-Cter in SUMO2). Residues Ser-308, Ser-309, Ser-310, and Ser-319 each carry the phosphoserine modification. Positions Glu-311–Asp-323 are enriched in acidic residues. Residues Ser-340–Lys-353 are compositionally biased toward basic residues. Thr-367 carries the post-translational modification Phosphothreonine. A PHD-type 1 zinc finger spans residues Gln-370–Glu-417. At Ser-428 the chain carries Phosphoserine. Residues Met-449 to Pro-496 form a PHD-type 2 zinc finger. A Chromo 1 domain is found at Thr-494–Lys-594. Disordered stretches follow at residues Trp-510–Gly-537 and Asn-578–Pro-603. Pro residues predominate over residues Pro-513–Pro-522. Ser-515 carries the post-translational modification Phosphoserine. Phosphothreonine is present on residues Thr-517 and Thr-529. Ser-531 carries the phosphoserine modification. Residues Lys-618 and Lys-696 each participate in a glycyl lysine isopeptide (Lys-Gly) (interchain with G-Cter in SUMO2) cross-link. Residues Met-622–Leu-697 enclose the Chromo 2 domain. Thr-703 bears the Phosphothreonine mark. A Glycyl lysine isopeptide (Lys-Gly) (interchain with G-Cter in SUMO1); alternate cross-link involves residue Lys-711. A Glycyl lysine isopeptide (Lys-Gly) (interchain with G-Cter in SUMO2); alternate cross-link involves residue Lys-711. One can recognise a Helicase ATP-binding domain in the interval Arg-738–Glu-922. Position 751-758 (Asp-751–Thr-758) interacts with ATP. Positions Asp-873–His-876 match the DEAH box motif. The region spanning Leu-1054–Leu-1203 is the Helicase C-terminal domain. Position 1209 is a phosphoserine (Ser-1209). Glycyl lysine isopeptide (Lys-Gly) (interchain with G-Cter in SUMO2) cross-links involve residues Lys-1212, Lys-1228, Lys-1239, and Lys-1304. Ser-1308, Ser-1349, and Ser-1370 each carry phosphoserine. Disordered regions lie at residues Asn-1344–Pro-1401 and Glu-1525–Asp-1562. Residues Lys-1528 and Lys-1529 each participate in a glycyl lysine isopeptide (Lys-Gly) (interchain with G-Cter in SUMO2) cross-link. 3 positions are modified to phosphoserine: Ser-1531, Ser-1535, and Ser-1537. Positions Ser-1535–Ser-1544 are enriched in pro residues. Residues Thr-1542, Thr-1549, and Thr-1553 each carry the phosphothreonine modification. Lys-1565 is covalently cross-linked (Glycyl lysine isopeptide (Lys-Gly) (interchain with G-Cter in SUMO2)). Ser-1570 bears the Phosphoserine mark. The segment covering Ser-1570–Lys-1584 has biased composition (basic and acidic residues). Disordered regions lie at residues Ser-1570 to Glu-1589 and Cys-1594 to Val-1644. A Glycyl lysine isopeptide (Lys-Gly) (interchain with G-Cter in SUMO2) cross-link involves residue Lys-1572. At Ser-1576 the chain carries Phosphoserine. Positions Ile-1577–Gln-1912 are required for interaction with PCNT. Lys-1584 participates in a covalent cross-link: Glycyl lysine isopeptide (Lys-Gly) (interchain with G-Cter in SUMO2). Ser-1602 is subject to Phosphoserine. Residues Glu-1603–Val-1644 are compositionally biased toward basic and acidic residues. Residues Lys-1606, Lys-1617, and Lys-1636 each participate in a glycyl lysine isopeptide (Lys-Gly) (interchain with G-Cter in SUMO2) cross-link. Lys-1643 participates in a covalent cross-link: Glycyl lysine isopeptide (Lys-Gly) (interchain with G-Cter in SUMO2); alternate. Lys-1643 is subject to N6-acetyllysine; alternate. Lys-1647 participates in a covalent cross-link: Glycyl lysine isopeptide (Lys-Gly) (interchain with G-Cter in SUMO2). Position 1653 is a phosphothreonine (Thr-1653). Glycyl lysine isopeptide (Lys-Gly) (interchain with G-Cter in SUMO2) cross-links involve residues Lys-1660 and Lys-1670. Thr-1679 carries the post-translational modification Phosphothreonine. Glycyl lysine isopeptide (Lys-Gly) (interchain with G-Cter in SUMO2) cross-links involve residues Lys-1687 and Lys-1865.

The protein belongs to the SNF2/RAD54 helicase family. As to quaternary structure, component of the nucleosome remodeling and deacetylase (NuRD) repressor complex, composed of core proteins MTA1, MTA2, MTA3, RBBP4, RBBP7, HDAC1, HDAC2, MBD2, MBD3, and peripherally associated proteins CDK2AP1, CDK2AP2, GATAD2A, GATAD2B, CHD3, CHD4 and CHD5. The exact stoichiometry of the NuRD complex is unknown, and some subunits such as MBD2 and MBD3, GATAD2A and GATAD2B, and CHD3, CHD4 and CHD5 define mutually exclusive NuRD complexes. Interacts with IKFZ1; the interaction is direct and when in part of the NuRD complex. Part of a complex containing ATR and HDAC2. Interacts with HDAC2; the interaction is direct. Interacts with the cohesin complex component RAD21; the interaction is direct. Interacts with the ISWI chromatin remodeling complex component SMARCA5; the interaction is direct. Interacts with ZGPAT; the interaction is direct. Interacts with ZMYND8; the interaction is direct, appears to occur with monomeric ZMYND8, and is increased following DNA damage. Interacts with BCL6. Interacts with BRD4. Interacts with CBX1. Interacts with CBX3. Interacts with CBX5. Interacts with GATAD2A. Interacts with HDAC1. Interacts with KLF1; the interaction depends on sumoylation of KLF1, and leads to its transcriptional repression. Interacts with MTA1. Interacts with PCNT. Interacts with RBBP7. Interacts with SETX. Interacts with TRIM27. Interacts with histone H3. Interacts with histone H4. Does not interact with PWWP2A. Does not interact with PWWP2B. Interacts (via KIKL motif) with BRD3 (via NET domain). The cofactor is Zn(2+). As to expression, widely expressed.

It localises to the nucleus. The protein localises to the cytoplasm. Its subcellular location is the cytoskeleton. The protein resides in the microtubule organizing center. It is found in the centrosome. The catalysed reaction is ATP + H2O = ADP + phosphate + H(+). In terms of biological role, ATP-dependent chromatin-remodeling factor that binds and distorts nucleosomal DNA. Acts as a component of the histone deacetylase NuRD complex which participates in the remodeling of chromatin. Localizes to acetylated damaged chromatin in a ZMYND8-dependent manner, to promote transcriptional repression and double-strand break repair by homologous recombination. Involved in neurogenesis. The chain is Chromodomain-helicase-DNA-binding protein 4 (CHD4) from Homo sapiens (Human).